The following is a 211-amino-acid chain: Arginine exporter protein ArgO (211 aa).

The next 6 helical transmembrane spans lie at 1-21 (MISYYFQGLALGAAMILPLGP), 37-57 (LMIALLCALSDLVLISAGIFG), 68-88 (LLALVTWGGVAFLLWYGFGAL), 111-131 (IIATMLAVTWLNPHVYLDTFV), 147-167 (WFALGTISASFLWFFGLALLA), and 179-199 (AQRIINILVGVVMWLIAFQLA).

Belongs to the LysE/ArgO transporter (TC 2.A.75) family.

It is found in the cell inner membrane. The catalysed reaction is L-arginine(in) = L-arginine(out). Its function is as follows. Involved in the export of arginine. Important to control the intracellular level of arginine and the correct balance between arginine and lysine. The sequence is that of Arginine exporter protein ArgO from Salmonella schwarzengrund (strain CVM19633).